The following is a 306-amino-acid chain: Tryptophan 2,3-dioxygenase (306 aa).

Residues 1 to 29 (MQPPGDDAAPRCPFAGAHAPDAPHVPEAA) form a disordered region. Residues 75–79 (FIIQH), Y137, and R141 each bind substrate. H264 is a heme binding site. Residue T278 participates in substrate binding.

The protein belongs to the tryptophan 2,3-dioxygenase family. Homotetramer. It depends on heme as a cofactor.

The enzyme catalyses L-tryptophan + O2 = N-formyl-L-kynurenine. It participates in amino-acid degradation; L-tryptophan degradation via kynurenine pathway; L-kynurenine from L-tryptophan: step 1/2. Heme-dependent dioxygenase that catalyzes the oxidative cleavage of the L-tryptophan (L-Trp) pyrrole ring and converts L-tryptophan to N-formyl-L-kynurenine. Catalyzes the oxidative cleavage of the indole moiety. This Burkholderia mallei (strain NCTC 10247) protein is Tryptophan 2,3-dioxygenase.